Consider the following 147-residue polypeptide: Histone H2B (147 aa).

Positions 1-31 are enriched in basic and acidic residues; it reads MAPKAEKKPAEKKPAEEKKAVAEKAPAEKKP. Residues 1–55 are disordered; sequence MAPKAEKKPAEKKPAEEKKAVAEKAPAEKKPKAGKKLPKEGGAAAGDKKKKRVKK. 3 positions are modified to N6-acetyllysine: K7, K35, and K36. A Glycyl lysine isopeptide (Lys-Gly) (interchain with G-Cter in ubiquitin) cross-link involves residue K143.

The protein belongs to the histone H2B family. As to quaternary structure, the nucleosome is a histone octamer containing two molecules each of H2A, H2B, H3 and H4 assembled in one H3-H4 heterotetramer and two H2A-H2B heterodimers. The octamer wraps approximately 147 bp of DNA. Can be acetylated to form H2BK6ac, H2BK33ac and H2BK34ac. In terms of processing, monoubiquitinated to form H2BK143ub1; may give a specific tag for epigenetic transcriptional activation.

The protein localises to the nucleus. It localises to the chromosome. Its function is as follows. Core component of nucleosome. Nucleosomes wrap and compact DNA into chromatin, limiting DNA accessibility to the cellular machineries which require DNA as a template. Histones thereby play a central role in transcription regulation, DNA repair, DNA replication and chromosomal stability. DNA accessibility is regulated via a complex set of post-translational modifications of histones, also called histone code, and nucleosome remodeling. The protein is Histone H2B (HIS2B) of Gossypium hirsutum (Upland cotton).